A 382-amino-acid polypeptide reads, in one-letter code: uncharacterized protein (382 aa).

This is an uncharacterized protein from Methanocaldococcus jannaschii (strain ATCC 43067 / DSM 2661 / JAL-1 / JCM 10045 / NBRC 100440) (Methanococcus jannaschii).